The primary structure comprises 162 residues: Transcription elongation factor GreA (162 aa).

Residues Arg46–Val77 adopt a coiled-coil conformation.

The protein belongs to the GreA/GreB family.

Functionally, necessary for efficient RNA polymerase transcription elongation past template-encoded arresting sites. The arresting sites in DNA have the property of trapping a certain fraction of elongating RNA polymerases that pass through, resulting in locked ternary complexes. Cleavage of the nascent transcript by cleavage factors such as GreA or GreB allows the resumption of elongation from the new 3'terminus. GreA releases sequences of 2 to 3 nucleotides. The chain is Transcription elongation factor GreA from Treponema pallidum (strain Nichols).